Consider the following 374-residue polypeptide: 4-hydroxybenzoate polyprenyltransferase, mitochondrial (374 aa).

Residues 1 to 34 constitute a mitochondrion transit peptide; it reads MLRWGGAGLARGLRAVRSAWLRGPRGLPLALVRS. Residues 35–83 lie on the Mitochondrial matrix side of the membrane; that stretch reads AGVPGARDRRAPAPGTQRGRALSLSAAAVVNSAPRPLQPYLRLMRLDKP. Residues 84-104 traverse the membrane as a helical segment; it reads IGTWLLYLPCTWSIGLAADPG. Residues 105–108 lie on the Mitochondrial intermembrane side of the membrane; that stretch reads CFPD. Residues 109 to 129 traverse the membrane as a helical segment; the sequence is WYMLSLFGTGAILMRGAGCTI. The Mitochondrial matrix portion of the chain corresponds to 130-148; it reads NDMWDRDFDKKVTRTANRP. Residues 149–169 traverse the membrane as a helical segment; the sequence is IAAGDISTFQSFVFLGGQLTL. Residues 170–172 are Mitochondrial intermembrane-facing; it reads ALG. The chain crosses the membrane as a helical span at residues 173 to 193; sequence VLLCLNYYSIAMGAASLLLVV. At 194–200 the chain is on the mitochondrial matrix side; sequence TYPLVKR. The chain crosses the membrane as a helical span at residues 201–221; it reads ITFWPQLALGLTFNWGALLGW. Residues 222–230 lie on the Mitochondrial intermembrane side of the membrane; that stretch reads SAVKGSCDP. A helical transmembrane segment spans residues 231–251; it reads AVCLPLYFSGVMWTLIYDTIY. Residues 252-277 lie on the Mitochondrial matrix side of the membrane; it reads AHQDKKDDALIGLKSTALLFQENTRQ. The helical transmembrane segment at 278 to 298 threads the bilayer; the sequence is WLSGFGVAMVAALSLAGANNG. Residues 299-332 are Mitochondrial intermembrane-facing; sequence QTVPYYAAVAAVGAHLAHQIYTVDIHRAEDCWDK. The helical transmembrane segment at 333-353 threads the bilayer; it reads FTSNRTVGMLLFLGIVLGNLC. Topologically, residues 354–374 are mitochondrial matrix; sequence KEKTEEAKDAEAVRVGSEQTS.

It belongs to the UbiA prenyltransferase family. Mg(2+) is required as a cofactor.

The protein resides in the mitochondrion inner membrane. The catalysed reaction is an all-trans-polyprenyl diphosphate + 4-hydroxybenzoate = a 4-hydroxy-3-(all-trans-polyprenyl)benzoate + diphosphate. It carries out the reaction all-trans-decaprenyl diphosphate + 4-hydroxybenzoate = 4-hydroxy-3-(all-trans-decaprenyl)benzoate + diphosphate. The enzyme catalyses all-trans-nonaprenyl diphosphate + 4-hydroxybenzoate = 4-hydroxy-3-(all-trans-nonaprenyl)benzoate + diphosphate. Its pathway is cofactor biosynthesis; ubiquinone biosynthesis. Functionally, mediates the second step in the final reaction sequence of coenzyme Q (CoQ) biosynthesis. Catalyzes the prenylation of para-hydroxybenzoate (PHB) with an all-trans polyprenyl donor (such as all-trans-nonaprenyl diphosphate). The length of the polyprenyl side chain varies depending on the species, in humans, the side chain is comprised of 10 isoprenyls producing CoQ10 (also known as ubiquinone), whereas rodents predominantly generate CoQ9. However, this specificity is not complete, human tissues have low amounts of CoQ9 and rodent organs contain some CoQ10. Plays a central role in the biosynthesis of CoQ9. CoQ9 is a vital molecule that transports electrons from mitochondrial respiratory chain complexes. CoQs also function as cofactors for uncoupling protein and play a role as regulators of the extracellularly-induced ceramide-dependent apoptotic pathway. Regulates mitochondrial permeability transition pore (mPTP) opening and ROS production (pivotal events in cell death) in a tissue specific manner. This is 4-hydroxybenzoate polyprenyltransferase, mitochondrial from Mus musculus (Mouse).